Consider the following 257-residue polypeptide: Thioesterase frbE (257 aa).

Belongs to the AMT4 thioesterase family.

Its pathway is antifungal biosynthesis. Thioesterase; part of the gene cluster that mediates the biosynthesis of the antifungal antibiotic FR901469, an inhibitor of beta-1,3-glucansynthase, exerting antifungal activity against the pathogenes Candida albicans and Aspergillus fumigatus. FR901469 is a cyclic depsipeptide containing 12 amino acid residues and a fatty acid chain. The NRPS frbI contains 12 modules responsible for the formation of the depsipeptide backbone which is denoted as Acyl-Thr-Ala-Tyr-Val-4OHPro-Thr-Thr-3OHPro-threo3OHGln-Gly-Thr-Orn-OH (C71H116N14O23). The PKS frbB is probably involved in the production of the hydrocarbon chain, and the acyl-CoA ligase frbC might be involved in the transport of the chain to the peptide ptoduct of frbI. Because FR901469 contains 3 hydroxylated amino acid residues, the 3 oxygenases frbA, frbH, and frbJ might be participating in amino acid hydroxylation. As no thioesterase domains were detected in frbI or frbB, the thioesterases frbD and frbE may instead release and cyclize the products of the NRPS and PKS, respectively. The sequence is that of Thioesterase frbE from Dothideomycetidae sp. (strain 11243) (Fungal sp. (strain No.11243)).